We begin with the raw amino-acid sequence, 226 residues long: MDWGGLHTILGGVNKHSTSIGKIWLTVLFIFRIMILVVAAKEVWGDEQADFVCNTLQPGCKNVCYDHYFPISHIRLWALQLIFVSTPALLVAMHVAYYRHEKKRKFIRGEIKTEFKDIEEIKKQKVRIEGSLWWTYTGSIFFRVIFEAAFMYVFYVMYDGFAMQRLVKCNAWPCPNTVDCFVSRPTEKTVFTVFMIAVSGICILLNVTELCYLLIRFCSGKSKKPV.

Residues 1–20 (MDWGGLHTILGGVNKHSTSI) are Cytoplasmic-facing. The chain crosses the membrane as a helical span at residues 21–40 (GKIWLTVLFIFRIMILVVAA). Residues 41–75 (KEVWGDEQADFVCNTLQPGCKNVCYDHYFPISHIR) are Extracellular-facing. 3 cysteine pairs are disulfide-bonded: cysteine 53–cysteine 180, cysteine 60–cysteine 174, and cysteine 64–cysteine 169. Residues 76 to 98 (LWALQLIFVSTPALLVAMHVAYY) traverse the membrane as a helical segment. At 99-131 (RHEKKRKFIRGEIKTEFKDIEEIKKQKVRIEGS) the chain is on the cytoplasmic side. The helical transmembrane segment at 132-154 (LWWTYTGSIFFRVIFEAAFMYVF) threads the bilayer. The Extracellular portion of the chain corresponds to 155–192 (YVMYDGFAMQRLVKCNAWPCPNTVDCFVSRPTEKTVFT). The helical transmembrane segment at 193 to 215 (VFMIAVSGICILLNVTELCYLLI) threads the bilayer. The Cytoplasmic portion of the chain corresponds to 216-226 (RFCSGKSKKPV).

Belongs to the connexin family. As to quaternary structure, a connexon is composed of a hexamer of connexins. Interacts with CNST.

It is found in the cell membrane. Its subcellular location is the cell junction. It localises to the gap junction. Functionally, one gap junction consists of a cluster of closely packed pairs of transmembrane channels, the connexons, through which materials of low MW diffuse from one cell to a neighboring cell. The chain is Gap junction beta-2 protein (GJB2) from Bos taurus (Bovine).